Here is a 295-residue protein sequence, read N- to C-terminus: Fatty acid desaturase 4-like 1, chloroplastic (295 aa).

Residues M1 to T29 constitute a chloroplast transit peptide. The next 3 membrane-spanning stretches (helical) occupy residues W72–F92, L102–I122, and L175–L195.

This sequence belongs to the fatty acid desaturase CarF family.

The protein localises to the plastid. Its subcellular location is the chloroplast membrane. Its pathway is lipid metabolism; fatty acid metabolism. Fatty acid desaturase involved in the production of chloroplast-specific phosphatidylglycerol molecular species. Catalyzes the formation of a trans double bond introduced close to the carboxyl group of palmitic acid, which is specifically esterified to the sn-2 glyceryl carbon of phosphatidylglycerol. This Arabidopsis thaliana (Mouse-ear cress) protein is Fatty acid desaturase 4-like 1, chloroplastic (FAD4L1).